The primary structure comprises 149 residues: Transcriptional regulator MraZ (149 aa).

SpoVT-AbrB domains follow at residues 7 to 54 (KYIN…GIAH) and 83 to 126 (AVQL…QPQN).

It belongs to the MraZ family. As to quaternary structure, forms oligomers.

It is found in the cytoplasm. It localises to the nucleoid. The polypeptide is Transcriptional regulator MraZ (Rickettsia typhi (strain ATCC VR-144 / Wilmington)).